The chain runs to 365 residues: Protein RecA (365 aa).

Glycine 77–threonine 84 is a binding site for ATP.

The protein belongs to the RecA family.

The protein localises to the cytoplasm. Functionally, can catalyze the hydrolysis of ATP in the presence of single-stranded DNA, the ATP-dependent uptake of single-stranded DNA by duplex DNA, and the ATP-dependent hybridization of homologous single-stranded DNAs. It interacts with LexA causing its activation and leading to its autocatalytic cleavage. The polypeptide is Protein RecA (Mesorhizobium japonicum (strain LMG 29417 / CECT 9101 / MAFF 303099) (Mesorhizobium loti (strain MAFF 303099))).